Here is a 211-residue protein sequence, read N- to C-terminus: Ribosomal RNA small subunit methyltransferase G (211 aa).

Residues Gly-76, Leu-81, 127–128 (VE), and Arg-142 each bind S-adenosyl-L-methionine.

It belongs to the methyltransferase superfamily. RNA methyltransferase RsmG family.

The protein resides in the cytoplasm. The enzyme catalyses guanosine(527) in 16S rRNA + S-adenosyl-L-methionine = N(7)-methylguanosine(527) in 16S rRNA + S-adenosyl-L-homocysteine. Its function is as follows. Specifically methylates the N7 position of guanine in position 527 of 16S rRNA. This is Ribosomal RNA small subunit methyltransferase G from Vibrio vulnificus (strain CMCP6).